The chain runs to 599 residues: Adenine deaminase (599 aa).

It belongs to the metallo-dependent hydrolases superfamily. Adenine deaminase family. Mn(2+) serves as cofactor.

The enzyme catalyses adenine + H2O + H(+) = hypoxanthine + NH4(+). The chain is Adenine deaminase from Clostridium botulinum (strain Loch Maree / Type A3).